Consider the following 280-residue polypeptide: MNKKIAIVTGASSGFGLLAAVKLARSFFVIATSRQPEKAEQLRELAAAHNVSDSIHITALDVTDEQSIVSFGKAVSAYAPIDLLVNNAGTAYGGFIEDVPMEHFRQQFETNVFGVIHVTKTVLPYIRKHGGAKIINVSSISGLTGFPALSPYVSSKHALEGFSESLRIELLPFGIETALIEPGSYKTSIWSTSLSNFMSVPADDSAYHQYYKKILSYVQKNGEESGDPQEVADLIYQLATKQHIKNLRYPIGKGIKLTLLFRSLFPWSAWESILKKKLFS.

Lys-3–Val-29 lines the NADP(+) pocket. Substrate is bound at residue Ser-139. Tyr-152 serves as the catalytic Proton acceptor.

The protein belongs to the short-chain dehydrogenases/reductases (SDR) family.

This is an uncharacterized protein from Bacillus subtilis (strain 168).